A 358-amino-acid chain; its full sequence is MAEFIRAQIFGTTFEITSRYSDLQPVGMGAFGLVCSAKDQLTNQNVAIKKIMKPFSTPVLAKRTYRELKLLKHLRHENVISLSDIFISPLEDIYFVTELLGTDLHRLLTSRPLEKQFIQYFLYQIMRGLKYVHSAGVVHRDLKPSNILVNENCDLKICDFGLARIQDPQMTGYVSTRYYRAPEIMLTWQKYDVEVDIWSAGCIFAEMLEGKPLFPGKDHVNQFSIITELLGTPPDDVINTIASENTLRFVKSLPKRERQPLKNKFKNADSSAVDLLERMLVFDPKKRITATEALSHEYLAPYHDPTDEPVAEEKFDWSFNDADLPVDTWKIMMYSEILDYHNVEASGQMMFQEDVPPQ.

In terms of domain architecture, Protein kinase spans 20 to 299 (YSDLQPVGMG…ATEALSHEYL (280 aa)). ATP contacts are provided by residues 26 to 34 (VGMGAFGLV) and Lys-49. The active-site Proton acceptor is Asp-141. Thr-171 carries the phosphothreonine modification. The TXY motif lies at 171 to 173 (TGY). The residue at position 173 (Tyr-173) is a Phosphotyrosine.

Belongs to the protein kinase superfamily. Ser/Thr protein kinase family. MAP kinase subfamily. HOG1 sub-subfamily. The cofactor is Mg(2+). In terms of processing, dually phosphorylated on Thr-171 and Tyr-173, which activates the enzyme. Phosphorylation is induced by fungicides and osmotic stress.

Its subcellular location is the cytoplasm. The protein resides in the nucleus. The enzyme catalyses L-seryl-[protein] + ATP = O-phospho-L-seryl-[protein] + ADP + H(+). It carries out the reaction L-threonyl-[protein] + ATP = O-phospho-L-threonyl-[protein] + ADP + H(+). With respect to regulation, activated by tyrosine and threonine phosphorylation. Functionally, proline-directed serine/threonine-protein kinase involved in a signal transduction pathway that is activated by changes in the osmolarity of the extracellular environment. Controls osmotic regulation of transcription of target genes. Involved in ion flux-mediated turgor regulation. The sequence is that of Mitogen-activated protein kinase hog-1 (hog-1) from Neurospora crassa (strain ATCC 24698 / 74-OR23-1A / CBS 708.71 / DSM 1257 / FGSC 987).